A 176-amino-acid polypeptide reads, in one-letter code: MDLPGPIHEILVLFGGFVLLLGGLGVVLLTNPTFSAFSLGLVLVCISLFYILLNSYFVAVAQLLIYVGAINVLIIFAVMFVNGSEWSKDKNFWTIGDGFTSLVCITIPFSLMTTIPDTSWYGILWTTRSNQIVEQGLINNVQQIGIHLATDFYLPFELISIILLVSLIGAITMARQ.

The next 5 helical transmembrane spans lie at 10 to 30 (ILVLFGGFVLLLGGLGVVLLT), 33 to 53 (TFSAFSLGLVLVCISLFYILL), 60 to 80 (VAQLLIYVGAINVLIIFAVMF), 92 to 112 (FWTIGDGFTSLVCITIPFSLM), and 152 to 172 (FYLPFELISIILLVSLIGAIT).

It belongs to the complex I subunit 6 family. NDH is composed of at least 16 different subunits, 5 of which are encoded in the nucleus.

It is found in the plastid. Its subcellular location is the chloroplast thylakoid membrane. The enzyme catalyses a plastoquinone + NADH + (n+1) H(+)(in) = a plastoquinol + NAD(+) + n H(+)(out). It catalyses the reaction a plastoquinone + NADPH + (n+1) H(+)(in) = a plastoquinol + NADP(+) + n H(+)(out). Its function is as follows. NDH shuttles electrons from NAD(P)H:plastoquinone, via FMN and iron-sulfur (Fe-S) centers, to quinones in the photosynthetic chain and possibly in a chloroplast respiratory chain. The immediate electron acceptor for the enzyme in this species is believed to be plastoquinone. Couples the redox reaction to proton translocation, and thus conserves the redox energy in a proton gradient. The protein is NAD(P)H-quinone oxidoreductase subunit 6, chloroplastic (ndhG) of Oryza nivara (Indian wild rice).